A 154-amino-acid chain; its full sequence is MPLLLSGQKFRTDLESFGCLAILSPLEGGAETRLLRRLRASGYQTQVTSARGLGDPVVFLTQLHGIRPPHLGHQNVGRNGALGEVQQVIPQLNELLVEDKPLVLWLLEGQVLSKSELLAINNLCQKEPRIKIVIEMGGARSIKWQPLNEFINKD.

Belongs to the complex I NdhN subunit family. As to quaternary structure, NDH-1 can be composed of about 15 different subunits; different subcomplexes with different compositions have been identified which probably have different functions.

It is found in the cellular thylakoid membrane. The catalysed reaction is a plastoquinone + NADH + (n+1) H(+)(in) = a plastoquinol + NAD(+) + n H(+)(out). The enzyme catalyses a plastoquinone + NADPH + (n+1) H(+)(in) = a plastoquinol + NADP(+) + n H(+)(out). NDH-1 shuttles electrons from an unknown electron donor, via FMN and iron-sulfur (Fe-S) centers, to quinones in the respiratory and/or the photosynthetic chain. The immediate electron acceptor for the enzyme in this species is believed to be plastoquinone. Couples the redox reaction to proton translocation, and thus conserves the redox energy in a proton gradient. Cyanobacterial NDH-1 also plays a role in inorganic carbon-concentration. This chain is NAD(P)H-quinone oxidoreductase subunit N, found in Prochlorococcus marinus (strain NATL2A).